Reading from the N-terminus, the 192-residue chain is Ethylene-responsive transcription factor ERF027 (192 aa).

Residues 18–74 constitute a DNA-binding region (AP2/ERF); the sequence is VYRGIRCRSGKWVSEIREPRKTTRIWLGTYPMAEMAAAAYDVAAMALKGREAVLNFP. Disordered stretches follow at residues 104-132 and 167-192; these read CEEGEEEKKAKEKKSSSSKSRARECHVDN and APPSWMGSRPSDDSPENSNDEDLWGY. Residues 179–192 are compositionally biased toward acidic residues; the sequence is DSPENSNDEDLWGY.

It belongs to the AP2/ERF transcription factor family. ERF subfamily.

Its subcellular location is the nucleus. Probably acts as a transcriptional activator. Binds to the GCC-box pathogenesis-related promoter element. May be involved in the regulation of gene expression by stress factors and by components of stress signal transduction pathways. This is Ethylene-responsive transcription factor ERF027 (ERF027) from Arabidopsis thaliana (Mouse-ear cress).